A 173-amino-acid chain; its full sequence is Translocon-associated protein subunit delta (173 aa).

The first 23 residues, 1 to 23 (MAAMASFGALALLLLSGLSCCSA), serve as a signal peptide directing secretion. At 24–144 (EACLEPQITP…SVDHRGTWNG (121 aa)) the chain is on the lumenal side. Cys26 and Cys57 are disulfide-bonded. Lys73 is covalently cross-linked (Glycyl lysine isopeptide (Lys-Gly) (interchain with G-Cter in ubiquitin)). The chain crosses the membrane as a helical span at residues 145–165 (PWVSTEVLAAAIGIVIYYLAF). The Cytoplasmic segment spans residues 166–173 (SAKSHIQA).

The protein belongs to the TRAP-delta family. Heterotetramer of TRAP-alpha, TRAP-beta, TRAP-delta and TRAP-gamma.

It is found in the endoplasmic reticulum membrane. Its function is as follows. TRAP proteins are part of a complex whose function is to bind calcium to the ER membrane and thereby regulate the retention of ER resident proteins. The sequence is that of Translocon-associated protein subunit delta (Ssr4) from Rattus norvegicus (Rat).